The sequence spans 314 residues: Secreted frizzled-related protein 5 (314 aa).

Positions 1–21 are cleaved as a signal peptide; it reads MWVAWSARTAALALLLGALHG. One can recognise an FZ domain in the interval 45–162; the sequence is SKPPQCLDIP…PLDNDLCIAV (118 aa). 8 disulfides stabilise this stretch: Cys50–Cys113, Cys60–Cys106, Cys97–Cys132, Cys121–Cys159, Cys125–Cys149, Cys178–Cys250, Cys181–Cys252, and Cys195–Cys300. The 123-residue stretch at 178 to 300 folds into the NTR domain; it reads CAQCEMEHSA…AVKFMFSYPC (123 aa).

This sequence belongs to the secreted frizzled-related protein (sFRP) family.

It localises to the secreted. In terms of biological role, soluble frizzled-related proteins (sFRPS) function as modulators of Wnt signaling through direct interaction with Wnts. They have a role in regulating cell growth and differentiation in specific cell types. SFRP5 may be involved in determining the polarity of photoreceptor, and perhaps, other cells in the retina. The polypeptide is Secreted frizzled-related protein 5 (Sfrp5) (Mus musculus (Mouse)).